A 79-amino-acid chain; its full sequence is Cytochrome b (79 aa).

The next 3 helical transmembrane spans lie at 1–7 (SALFLAM), 31–52 (WLIRYIHANGASLFFICLYLHI), and 67–79 (WNIGIILLFLTMA). Heme b contacts are provided by H37 and H51.

This sequence belongs to the cytochrome b family. As to quaternary structure, the cytochrome bc1 complex contains 11 subunits: 3 respiratory subunits (MT-CYB, CYC1 and UQCRFS1), 2 core proteins (UQCRC1 and UQCRC2) and 6 low-molecular weight proteins (UQCRH/QCR6, UQCRB/QCR7, UQCRQ/QCR8, UQCR10/QCR9, UQCR11/QCR10 and a cleavage product of UQCRFS1). This cytochrome bc1 complex then forms a dimer. The cofactor is heme b.

The protein resides in the mitochondrion inner membrane. In terms of biological role, component of the ubiquinol-cytochrome c reductase complex (complex III or cytochrome b-c1 complex) that is part of the mitochondrial respiratory chain. The b-c1 complex mediates electron transfer from ubiquinol to cytochrome c. Contributes to the generation of a proton gradient across the mitochondrial membrane that is then used for ATP synthesis. This is Cytochrome b (MT-CYB) from Dipodomys panamintinus (Panamint kangaroo rat).